The following is a 130-amino-acid chain: uncharacterized protein (130 aa).

3 helical membrane passes run 34–54, 73–93, and 107–127; these read AILI…FAFF, LLLT…GWLA, and FGTG…IVWI.

It localises to the cell membrane. This is an uncharacterized protein from Mycoplasma pneumoniae (strain ATCC 29342 / M129 / Subtype 1) (Mycoplasmoides pneumoniae).